The chain runs to 336 residues: Fructose-1,6-bisphosphatase class 1 (336 aa).

Residues Glu90, Asp112, Leu114, and Asp115 each contribute to the Mg(2+) site. Substrate is bound by residues 115-118, Asn211, and Lys277; that span reads DGSS. Glu283 contacts Mg(2+).

Belongs to the FBPase class 1 family. Homotetramer. It depends on Mg(2+) as a cofactor.

Its subcellular location is the cytoplasm. The catalysed reaction is beta-D-fructose 1,6-bisphosphate + H2O = beta-D-fructose 6-phosphate + phosphate. The protein operates within carbohydrate biosynthesis; gluconeogenesis. The polypeptide is Fructose-1,6-bisphosphatase class 1 (Pseudomonas putida (strain W619)).